Consider the following 171-residue polypeptide: Laminin subunit beta-1 (171 aa).

The first 29 residues, 1-29, serve as a signal peptide directing secretion; sequence MNGRTQNLWFSTFRLVIVYALFFAKLCFG. Cystine bridges form between Cys59–Cys69, Cys72–Cys81, Cys84–Cys100, Cys103–Cys118, and Cys105–Cys128. Laminin EGF-like domains follow at residues 66–102, 103–160, and 161–171; these read TGVC…VCQR, CQCP…TCKK, and CLCNGNINSAS. A glycan (N-linked (GlcNAc...) asparagine) is linked at Asn130. 2 cysteine pairs are disulfide-bonded: Cys131–Cys140 and Cys143–Cys158.

Laminin is a complex glycoprotein, consisting of three different polypeptide chains (alpha, beta, gamma), which are bound to each other by disulfide bonds into a cross-shaped molecule comprising one long and three short arms with globules at each end.

It is found in the secreted. The protein resides in the extracellular space. The protein localises to the extracellular matrix. Its subcellular location is the basement membrane. In terms of biological role, binding to cells via a high affinity receptor, laminin is thought to mediate the attachment, migration and organization of cells into tissues during embryonic development by interacting with other extracellular matrix components. This Hydra vulgaris (Hydra) protein is Laminin subunit beta-1.